The following is a 121-amino-acid chain: Large ribosomal subunit protein mL52 (121 aa).

Residues 1–22 (MAALGTWLSSVRRLHCSVVARA) constitute a mitochondrion transit peptide. Residues 98-109 (QEERKKEHDLKP) are compositionally biased toward basic and acidic residues. Positions 98–121 (QEERKKEHDLKPKGTLLRSPLPNQ) are disordered.

The protein belongs to the mitochondrion-specific ribosomal protein mL52 family. Component of the mitochondrial ribosome large subunit (39S) which comprises a 16S rRNA and about 50 distinct proteins.

Its subcellular location is the mitochondrion. The polypeptide is Large ribosomal subunit protein mL52 (Mrpl52) (Mus musculus (Mouse)).